Consider the following 408-residue polypeptide: Cytochrome bc1 complex Rieske iron-sulfur subunit (408 aa).

A run of 3 helical transmembrane segments spans residues 56–76 (VGIWAALGILGGIGFLITYIF), 98–118 (MLGITSGLCIISLGIAGVLYV), and 166–186 (LLAGGAVMAGLTIVAPLGGMI). The 98-residue stretch at 293–390 (HGPRNAVMLI…ITVDEEGYLI (98 aa)) folds into the Rieske domain. [2Fe-2S] cluster-binding residues include Cys333, His335, Cys352, and His355. The cysteines at positions 338 and 354 are disulfide-linked.

Belongs to the Rieske iron-sulfur protein family. In terms of assembly, the cytochrome bc1 complex is composed of a cytochrome b (QcrB), the Rieske iron-sulfur protein (QcrA) and a diheme cytochrome c (QcrC) subunit. The bc1 complex forms a supercomplex with cytochrome c oxidase (cytochrome aa3). [2Fe-2S] cluster is required as a cofactor.

It is found in the cell membrane. Its function is as follows. Iron-sulfur subunit of the cytochrome bc1 complex, an essential component of the respiratory electron transport chain required for ATP synthesis. The bc1 complex catalyzes the oxidation of menaquinol and the reduction of cytochrome c in the respiratory chain. The bc1 complex operates through a Q-cycle mechanism that couples electron transfer to generation of the proton gradient that drives ATP synthesis. The sequence is that of Cytochrome bc1 complex Rieske iron-sulfur subunit (qcrA) from Corynebacterium efficiens (strain DSM 44549 / YS-314 / AJ 12310 / JCM 11189 / NBRC 100395).